The chain runs to 225 residues: MHIHDWPTHERPREKLLARGATALSDAELLAIFVGSGLRGQDAVQTARDLLHRHGPLRLLLDRPAKTLARLPGLGPASACKLAAAMELAQRHLMSALERGEALSDPPSVGRYFSQRLRARAYEVFAALFLDNRHRAIAFEELFTGTIDGADIHPREVVRRALLHNAAAVIVGHNHPSGNPEPSEADRAVTKRLLDSLELVDIRLLDHFVIGDGRPVSFAERGWLE.

The MPN domain maps to 102 to 224; it reads ALSDPPSVGR…PVSFAERGWL (123 aa). Zn(2+) contacts are provided by His173, His175, and Asp186. Positions 173–186 match the JAMM motif motif; that stretch reads HNHPSGNPEPSEAD.

This sequence belongs to the UPF0758 family.

This is UPF0758 protein XCV4028 from Xanthomonas euvesicatoria pv. vesicatoria (strain 85-10) (Xanthomonas campestris pv. vesicatoria).